Here is a 65-residue protein sequence, read N- to C-terminus: U2-theraphotoxin-Pc1a (65 aa).

A signal peptide spans 1–20 (MGFKLVLFIAVLTLVGSSNA). The propeptide occupies 21–36 (EISAKMDSRDSPMIQE). Cystine bridges form between C39–C56, C46–C59, and C55–C64.

This sequence belongs to the neurotoxin 36 family. 02 subfamily. As to expression, expressed by the venom gland.

The protein localises to the secreted. Functionally, possesses strong antiplasmodial activity against the intra-erythrocyte stage of P.falciparum in vitro. IC(50) for inhibiting P.falciparum growth is 1.15 uM. Specifically interacts with infected erythrocytes. Does not lyse erythrocytes, is not cytotoxic to nucleated mammalian cells, and does not inhibit neuromuscular function. Has neither antibacterial nor antifungal activity. The chain is U2-theraphotoxin-Pc1a from Psalmopoeus cambridgei (Trinidad chevron tarantula).